The chain runs to 354 residues: UDP-3-O-acylglucosamine N-acyltransferase (354 aa).

Histidine 257 functions as the Proton acceptor in the catalytic mechanism.

Belongs to the transferase hexapeptide repeat family. LpxD subfamily. Homotrimer.

The enzyme catalyses a UDP-3-O-[(3R)-3-hydroxyacyl]-alpha-D-glucosamine + a (3R)-hydroxyacyl-[ACP] = a UDP-2-N,3-O-bis[(3R)-3-hydroxyacyl]-alpha-D-glucosamine + holo-[ACP] + H(+). Its pathway is bacterial outer membrane biogenesis; LPS lipid A biosynthesis. Its function is as follows. Catalyzes the N-acylation of UDP-3-O-acylglucosamine using 3-hydroxyacyl-ACP as the acyl donor. Is involved in the biosynthesis of lipid A, a phosphorylated glycolipid that anchors the lipopolysaccharide to the outer membrane of the cell. The chain is UDP-3-O-acylglucosamine N-acyltransferase from Rhizobium johnstonii (strain DSM 114642 / LMG 32736 / 3841) (Rhizobium leguminosarum bv. viciae).